Reading from the N-terminus, the 72-residue chain is MNWMILLWITLGIVIGIAIGFFIARKTMMSYLKKNPPINEQMLRVMLMQMGQNPSQKKINQMMKAMQKQQSK.

A helical transmembrane segment spans residues 3-23 (WMILLWITLGIVIGIAIGFFI).

Belongs to the UPF0154 family.

It localises to the membrane. The protein is UPF0154 protein BH2350 of Halalkalibacterium halodurans (strain ATCC BAA-125 / DSM 18197 / FERM 7344 / JCM 9153 / C-125) (Bacillus halodurans).